Consider the following 267-residue polypeptide: 3-isopropylmalate dehydratase large subunit (267 aa).

The [4Fe-4S] cluster site is built by cysteine 146, cysteine 206, and cysteine 209.

It belongs to the aconitase/IPM isomerase family. LeuC type 1 subfamily. Heterodimer of LeuC and LeuD. It depends on [4Fe-4S] cluster as a cofactor.

It catalyses the reaction (2R,3S)-3-isopropylmalate = (2S)-2-isopropylmalate. The protein operates within amino-acid biosynthesis; L-leucine biosynthesis; L-leucine from 3-methyl-2-oxobutanoate: step 2/4. Functionally, catalyzes the isomerization between 2-isopropylmalate and 3-isopropylmalate, via the formation of 2-isopropylmaleate. The polypeptide is 3-isopropylmalate dehydratase large subunit (leuC) (Cupriavidus necator (Alcaligenes eutrophus)).